Here is a 133-residue protein sequence, read N- to C-terminus: p53 and DNA damage-regulated protein 1 (133 aa).

Belongs to the prefoldin subunit beta family. As to quaternary structure, component of the PAQosome complex which is responsible for the biogenesis of several protein complexes and which consists of R2TP complex members RUVBL1, RUVBL2, RPAP3 and PIH1D1, URI complex members PFDN2, PFDN6, PDRG1, UXT and URI1 as well as ASDURF, POLR2E and DNAAF10/WDR92.

It is found in the cytoplasm. In terms of biological role, may play a role in chaperone-mediated protein folding. The chain is p53 and DNA damage-regulated protein 1 (PDRG1) from Pongo abelii (Sumatran orangutan).